Here is a 541-residue protein sequence, read N- to C-terminus: Glutamyl-tRNA(Gln) amidotransferase subunit B, mitochondrial (541 aa).

Belongs to the GatB/GatE family. GatB subfamily. Subunit of the heterotrimeric GatFAB amidotransferase (AdT) complex, composed of A, B and F subunits.

Its subcellular location is the mitochondrion. It catalyses the reaction L-glutamyl-tRNA(Gln) + L-glutamine + ATP + H2O = L-glutaminyl-tRNA(Gln) + L-glutamate + ADP + phosphate + H(+). Functionally, allows the formation of correctly charged Gln-tRNA(Gln) through the transamidation of misacylated Glu-tRNA(Gln) in the mitochondria. The reaction takes place in the presence of glutamine and ATP through an activated gamma-phospho-Glu-tRNA(Gln). This chain is Glutamyl-tRNA(Gln) amidotransferase subunit B, mitochondrial, found in Saccharomyces cerevisiae (strain RM11-1a) (Baker's yeast).